The following is a 277-amino-acid chain: NH(3)-dependent NAD(+) synthetase (277 aa).

36-43 (GLSGGIDS) contacts ATP. Asp42 serves as a coordination point for Mg(2+). Arg118 provides a ligand contact to deamido-NAD(+). Thr138 lines the ATP pocket. Glu143 contacts Mg(2+). Residues Lys167 and Ser189 each contribute to the ATP site.

It belongs to the NAD synthetase family. In terms of assembly, homodimer.

It carries out the reaction deamido-NAD(+) + NH4(+) + ATP = AMP + diphosphate + NAD(+) + H(+). It participates in cofactor biosynthesis; NAD(+) biosynthesis; NAD(+) from deamido-NAD(+) (ammonia route): step 1/1. Catalyzes the ATP-dependent amidation of deamido-NAD to form NAD. Uses ammonia as a nitrogen source. This Chlorobium phaeovibrioides (strain DSM 265 / 1930) (Prosthecochloris vibrioformis (strain DSM 265)) protein is NH(3)-dependent NAD(+) synthetase.